Reading from the N-terminus, the 248-residue chain is Tyrosine recombinase XerD-like (248 aa).

A Core-binding (CB) domain is found at 1–72 (MKSYIEPFIA…TANQFLYYLY (72 aa)). The region spanning 85-248 (DTMKVMRTEK…PVTLEKYYKS (164 aa)) is the Tyr recombinase domain. Active-site residues include K149 and R213. Residue Y245 is the O-(3'-phospho-DNA)-tyrosine intermediate of the active site.

Belongs to the 'phage' integrase family. XerD-like subfamily.

Its subcellular location is the cytoplasm. Putative tyrosine recombinase. Not involved in the cutting and rejoining of the recombining DNA molecules on dif(SL) site. The protein is Tyrosine recombinase XerD-like of Streptococcus pyogenes serotype M18 (strain MGAS8232).